A 211-amino-acid polypeptide reads, in one-letter code: LexA repressor (211 aa).

The H-T-H motif DNA-binding region spans 27–47; the sequence is QTEIARAFGFKGVRAAQYHLE. Catalysis depends on for autocatalytic cleavage activity residues Ser-131 and Lys-168.

The protein belongs to the peptidase S24 family. In terms of assembly, homodimer.

It catalyses the reaction Hydrolysis of Ala-|-Gly bond in repressor LexA.. Represses a number of genes involved in the response to DNA damage (SOS response), including recA and lexA. In the presence of single-stranded DNA, RecA interacts with LexA causing an autocatalytic cleavage which disrupts the DNA-binding part of LexA, leading to derepression of the SOS regulon and eventually DNA repair. The protein is LexA repressor of Stenotrophomonas maltophilia (strain R551-3).